We begin with the raw amino-acid sequence, 112 residues long: UPF0102 protein TTHA0372 (112 aa).

This sequence belongs to the UPF0102 family.

This chain is UPF0102 protein TTHA0372, found in Thermus thermophilus (strain ATCC 27634 / DSM 579 / HB8).